Reading from the N-terminus, the 188-residue chain is Pyridoxal 5'-phosphate synthase subunit PdxT (188 aa).

An L-glutamine-binding site is contributed by 47 to 49 (GES). Residue Cys-79 is the Nucleophile of the active site. L-glutamine-binding positions include Arg-105 and 134 to 135 (IR). Active-site charge relay system residues include His-170 and Glu-172.

The protein belongs to the glutaminase PdxT/SNO family. As to quaternary structure, in the presence of PdxS, forms a dodecamer of heterodimers. Only shows activity in the heterodimer.

It carries out the reaction aldehydo-D-ribose 5-phosphate + D-glyceraldehyde 3-phosphate + L-glutamine = pyridoxal 5'-phosphate + L-glutamate + phosphate + 3 H2O + H(+). The catalysed reaction is L-glutamine + H2O = L-glutamate + NH4(+). Its pathway is cofactor biosynthesis; pyridoxal 5'-phosphate biosynthesis. In terms of biological role, catalyzes the hydrolysis of glutamine to glutamate and ammonia as part of the biosynthesis of pyridoxal 5'-phosphate. The resulting ammonia molecule is channeled to the active site of PdxS. This is Pyridoxal 5'-phosphate synthase subunit PdxT from Listeria monocytogenes serotype 4b (strain CLIP80459).